Consider the following 678-residue polypeptide: Glycine--tRNA ligase beta subunit (678 aa).

Belongs to the class-II aminoacyl-tRNA synthetase family. As to quaternary structure, tetramer of two alpha and two beta subunits.

It localises to the cytoplasm. It catalyses the reaction tRNA(Gly) + glycine + ATP = glycyl-tRNA(Gly) + AMP + diphosphate. This chain is Glycine--tRNA ligase beta subunit, found in Streptococcus suis (strain 98HAH33).